We begin with the raw amino-acid sequence, 33 residues long: Brevinin-2Ea (33 aa).

A disulfide bond links cysteine 27 and cysteine 33.

It belongs to the frog skin active peptide (FSAP) family. Brevinin subfamily. As to expression, expressed by the skin glands.

It is found in the secreted. Shows antibacterial activity against representative Gram-negative and Gram-positive bacterial species, and hemolytic activity. The sequence is that of Brevinin-2Ea from Pelophylax lessonae (Pool frog).